A 491-amino-acid chain; its full sequence is GTPase Der (491 aa).

2 consecutive EngA-type G domains span residues 3–166 and 200–373; these read PVVA…AEAM and IKLA…DSAT. Residues 9–16, 56–60, 118–121, 206–213, 253–257, and 318–321 each bind GTP; these read GRPNVGKS, DTGGI, NKVD, GKPNVGKS, DTAGV, and NKWD. Residues 374-458 enclose the KH-like domain; the sequence is RRVSTSMLTR…PIQIRFQEGD (85 aa). The segment at 472–491 is disordered; sequence QERRRKRALSHINDRKTKGE.

It belongs to the TRAFAC class TrmE-Era-EngA-EngB-Septin-like GTPase superfamily. EngA (Der) GTPase family. Associates with the 50S ribosomal subunit.

Functionally, GTPase that plays an essential role in the late steps of ribosome biogenesis. This Shewanella denitrificans (strain OS217 / ATCC BAA-1090 / DSM 15013) protein is GTPase Der.